The primary structure comprises 423 residues: MTDLLSRAHADALDAADPLRSLRDAFVFPQHGDRDQTYLVGNSLGLQPRAARAMVDEVLDQWGTLGVEGHFTGPTQWLTYHQLVRDALARVVGAQPGEVVAMNTLSVNLHLMMASFYRPTHERGAILIEAGAFPSDRHAVESQLRLRGLDPATHLIEVEADEPNGTLSMAAIADAIAQHGPRLALVLWPGIQYRTGQAFDLAEIVRLARAQGAAVGCDLAHAVGNIPLTLHDDGVDFAVWCNYKYLNAGPGAVGGCFVHERHANSDLPRIAGWWGHEQQTRFRMDPQFVPSPGAEGWQLSNPPVLALAPLRASLALFDQTGMAALRAKSERLTGHLEQLIHARVPQVLQIVTPAEPMRRGCQLSLRVAGGRAQGCSLFEHLHAAGVLGDWREPDLIRIAPVPLYNRFSDLHTFVGQVEAWAAA.

Pyridoxal 5'-phosphate-binding positions include leucine 105, serine 106, 133–136 (FPSD), aspartate 218, histidine 221, and tyrosine 243. Residue lysine 244 is modified to N6-(pyridoxal phosphate)lysine. Pyridoxal 5'-phosphate contacts are provided by tryptophan 273 and asparagine 301.

Belongs to the kynureninase family. Homodimer. It depends on pyridoxal 5'-phosphate as a cofactor.

It carries out the reaction L-kynurenine + H2O = anthranilate + L-alanine + H(+). It catalyses the reaction 3-hydroxy-L-kynurenine + H2O = 3-hydroxyanthranilate + L-alanine + H(+). It functions in the pathway amino-acid degradation; L-kynurenine degradation; L-alanine and anthranilate from L-kynurenine: step 1/1. The protein operates within cofactor biosynthesis; NAD(+) biosynthesis; quinolinate from L-kynurenine: step 2/3. Its function is as follows. Catalyzes the cleavage of L-kynurenine (L-Kyn) and L-3-hydroxykynurenine (L-3OHKyn) into anthranilic acid (AA) and 3-hydroxyanthranilic acid (3-OHAA), respectively. This chain is Kynureninase, found in Xanthomonas oryzae pv. oryzae (strain MAFF 311018).